Consider the following 281-residue polypeptide: MTQKTIRVGDIEIANDRPMALFGGMNVLESRDLALRVCEEYVRVTGKLGIPYVFKASFDKANRSSITSFRGPGLEEGMRIFEEVKKAFGVPVLTDVHEPWQAAPVAEVCDILQLPAFLSRQTDLVVAMAKTSAVINIKKAQFLAPQEMQHILRKCEEAGNDQLILCERGTSFGYNNLVVDMLGFGIMKQFEYPVFFDVTHALQMPGGRADSAGGRRAQVTDLAKAGISQGLAGLFLEAHPDPDNAKCDGPCALRLDKLEPFLAQLAQLDALVKKFPPIETA.

This sequence belongs to the KdsA family.

Its subcellular location is the cytoplasm. It catalyses the reaction D-arabinose 5-phosphate + phosphoenolpyruvate + H2O = 3-deoxy-alpha-D-manno-2-octulosonate-8-phosphate + phosphate. It participates in carbohydrate biosynthesis; 3-deoxy-D-manno-octulosonate biosynthesis; 3-deoxy-D-manno-octulosonate from D-ribulose 5-phosphate: step 2/3. The protein operates within bacterial outer membrane biogenesis; lipopolysaccharide biosynthesis. This chain is 2-dehydro-3-deoxyphosphooctonate aldolase, found in Azotobacter vinelandii (strain DJ / ATCC BAA-1303).